Reading from the N-terminus, the 433-residue chain is Signal recognition particle 54 kDa protein (433 aa).

GTP is bound by residues 106-113 (GVEGSGKT), 186-190 (DTAGR), and 244-247 (TKMD).

Belongs to the GTP-binding SRP family. SRP54 subfamily. As to quaternary structure, part of the signal recognition particle protein translocation system, which is composed of SRP and FtsY. Archaeal SRP consists of a 7S RNA molecule of 300 nucleotides and two protein subunits: SRP54 and SRP19.

The protein resides in the cytoplasm. It carries out the reaction GTP + H2O = GDP + phosphate + H(+). In terms of biological role, involved in targeting and insertion of nascent membrane proteins into the cytoplasmic membrane. Binds to the hydrophobic signal sequence of the ribosome-nascent chain (RNC) as it emerges from the ribosomes. The SRP-RNC complex is then targeted to the cytoplasmic membrane where it interacts with the SRP receptor FtsY. The chain is Signal recognition particle 54 kDa protein from Pyrobaculum aerophilum (strain ATCC 51768 / DSM 7523 / JCM 9630 / CIP 104966 / NBRC 100827 / IM2).